We begin with the raw amino-acid sequence, 424 residues long: Tryptophan synthase beta chain (424 aa).

Lys-108 is modified (N6-(pyridoxal phosphate)lysine).

The protein belongs to the TrpB family. In terms of assembly, tetramer of two alpha and two beta chains. It depends on pyridoxal 5'-phosphate as a cofactor.

The catalysed reaction is (1S,2R)-1-C-(indol-3-yl)glycerol 3-phosphate + L-serine = D-glyceraldehyde 3-phosphate + L-tryptophan + H2O. The protein operates within amino-acid biosynthesis; L-tryptophan biosynthesis; L-tryptophan from chorismate: step 5/5. Functionally, the beta subunit is responsible for the synthesis of L-tryptophan from indole and L-serine. This Thermoplasma acidophilum (strain ATCC 25905 / DSM 1728 / JCM 9062 / NBRC 15155 / AMRC-C165) protein is Tryptophan synthase beta chain (trpB).